Consider the following 719-residue polypeptide: Developmental regulator flbA (719 aa).

The segment covering 1–17 (MPTSISTAPLSQGSPPS) has biased composition (polar residues). 3 disordered regions span residues 1–39 (MPTSISTAPLSQGSPPSSLIDYQPQSVPSSSSPPPSTAA), 117–141 (IGSTTNSSLRQSASSGSLQKHSRKA), and 155–190 (LSPPLSDGSGSSEQSSSAPFEPLSAVTEQPNPAAER). 2 stretches are compositionally biased toward low complexity: residues 123–135 (SSLRQSASSGSLQ) and 158–171 (PLSDGSGSSEQSSS). The segment at 214-411 (QTSSRLLRMT…QDGPNVKSSV (198 aa)) is fungal-DR. Residues 425–511 (GLVGVKMARE…SKNAIYAITE (87 aa)) form the DEP domain. In terms of domain architecture, RGS spans 540–685 (SNNARLNHIL…FLRDPKYSAI (146 aa)). Residues 694-719 (LIGGGRSYSPTPGNVPERSMSRSQRS) are disordered.

Functionally, required for asexual sporulation and normal colony development. May be involved in brlA activation. Could play a regulatory role in controlling the flug-initiated signal transduction pathway that triggers the asexual reproduction. This chain is Developmental regulator flbA (flbA), found in Emericella nidulans (strain FGSC A4 / ATCC 38163 / CBS 112.46 / NRRL 194 / M139) (Aspergillus nidulans).